Reading from the N-terminus, the 601-residue chain is Elongation factor 4 (601 aa).

Residues 8–189 (EQIRNFGIIA…LIVRKAPPPK (182 aa)) form the tr-type G domain. Residue 20-25 (DHGKST) coordinates GTP.

The protein belongs to the TRAFAC class translation factor GTPase superfamily. Classic translation factor GTPase family. LepA subfamily.

The protein localises to the cell membrane. The enzyme catalyses GTP + H2O = GDP + phosphate + H(+). Required for accurate and efficient protein synthesis under certain stress conditions. May act as a fidelity factor of the translation reaction, by catalyzing a one-codon backward translocation of tRNAs on improperly translocated ribosomes. Back-translocation proceeds from a post-translocation (POST) complex to a pre-translocation (PRE) complex, thus giving elongation factor G a second chance to translocate the tRNAs correctly. Binds to ribosomes in a GTP-dependent manner. This is Elongation factor 4 from Tropheryma whipplei (strain TW08/27) (Whipple's bacillus).